The primary structure comprises 287 residues: Ribonuclease Z (287 aa).

The Zn(2+) site is built by His64, His66, Asp68, His69, His124, Asp191, and His250. Asp68 serves as the catalytic Proton acceptor.

This sequence belongs to the RNase Z family. As to quaternary structure, homodimer. Requires Zn(2+) as cofactor.

The catalysed reaction is Endonucleolytic cleavage of RNA, removing extra 3' nucleotides from tRNA precursor, generating 3' termini of tRNAs. A 3'-hydroxy group is left at the tRNA terminus and a 5'-phosphoryl group is left at the trailer molecule.. Zinc phosphodiesterase, which displays some tRNA 3'-processing endonuclease activity. Probably involved in tRNA maturation, by removing a 3'-trailer from precursor tRNA. This chain is Ribonuclease Z, found in Pyrobaculum arsenaticum (strain DSM 13514 / JCM 11321 / PZ6).